We begin with the raw amino-acid sequence, 498 residues long: MAEVDWIHRHPKAEDLRVGLISWAGTYLTFEAYKSSVTASAKSLGRRQTWELLVSNEHESQAVIRLKSLQGLYLLCEADGTVCYGRPRTSHHGCFLLRFHRNGKWTLQCIISGRYLESDGEDVFCNSRVLSAYHMWTPRPALHVHVILYSPIYHSYARADHTVGRIWVDAAIPCLEECGFLLHFQDGCYHLETSTHHFLSRVDRLVPQRSSQTAFHMQVRPRGLVALCDGEGGTLYPQGSHLLLGMGSAPMKGEEWFVLQHFPTWVSLKSKSRRFLSVIYDAEVCAASERLTQMSLFQYECDSETPTLQLRSANGYYLAQRRHRAIIADGHPMESDTFFRVHWNCGKITLQSPNGRFLGIASDGLLMANVTIPGPNEELGIRFANRPFLVLRGRYGYVGSSSDHDLLKCNMDQPDCIQLLPCRQGIYHFQAQGGSFWSITSFGTFRPWGKFALNFCIELQGSSLLTVLAPNGFYLRADRSGTLLADSEEITKECIWEF.

This sequence belongs to the fascin family. Expressed in testis.

It is found in the cytoplasm. The protein resides in the cytoskeleton. Functionally, acts as an actin bundling protein. The sequence is that of Fascin-3 (Fscn3) from Mus musculus (Mouse).